The chain runs to 408 residues: 3-phosphoshikimate 1-carboxyvinyltransferase (408 aa).

3 residues coordinate 3-phosphoshikimate: K10, S11, and R15. Phosphoenolpyruvate is bound at residue K10. The phosphoenolpyruvate site is built by G79 and R107. Residues S150, S151, Q152, S179, E297, and H324 each coordinate 3-phosphoshikimate. A phosphoenolpyruvate-binding site is contributed by Q152. The active-site Proton acceptor is E297. 3 residues coordinate phosphoenolpyruvate: R328, R369, and K394.

This sequence belongs to the EPSP synthase family. In terms of assembly, monomer.

It is found in the cytoplasm. The enzyme catalyses 3-phosphoshikimate + phosphoenolpyruvate = 5-O-(1-carboxyvinyl)-3-phosphoshikimate + phosphate. The protein operates within metabolic intermediate biosynthesis; chorismate biosynthesis; chorismate from D-erythrose 4-phosphate and phosphoenolpyruvate: step 6/7. In terms of biological role, catalyzes the transfer of the enolpyruvyl moiety of phosphoenolpyruvate (PEP) to the 5-hydroxyl of shikimate-3-phosphate (S3P) to produce enolpyruvyl shikimate-3-phosphate and inorganic phosphate. The sequence is that of 3-phosphoshikimate 1-carboxyvinyltransferase from Corynebacterium efficiens (strain DSM 44549 / YS-314 / AJ 12310 / JCM 11189 / NBRC 100395).